Consider the following 596-residue polypeptide: Histone deacetylase 9 (596 aa).

Composition is skewed to basic and acidic residues over residues 132-153 (REKEQKMEQQRKEQEAERHRQE) and 160-172 (RSKDRVKERAVAS). Disordered regions lie at residues 132-172 (REKE…AVAS), 214-258 (HTSL…VRSR), 293-313 (SSVSSSSPVSGPSSPNNGPVA), and 522-596 (QPEG…QQVT). The interaction with mef2 stretch occupies residues 172 to 222 (STEVKQKLQEFILSKSATKEPLTNGTSHSMGRHPKLWYTAAHHTSLDQSSP). Positions 221–237 (SPPPSGTSPTYKCPPPG) are enriched in pro residues. A compositionally biased stretch (low complexity) spans 293 to 312 (SSVSSSSPVSGPSSPNNGPV). The segment covering 522-536 (QPEGHLEEAEEDLHG) has biased composition (basic and acidic residues). The segment covering 541 to 558 (QEKSSSIDNTRSYSSTDL) has biased composition (polar residues). Positions 567 to 585 (KVKEEPPDSENEIKTHLQS) are enriched in basic and acidic residues. Over residues 586 to 596 (EQKSVFAQQVT) the composition is skewed to polar residues.

This sequence belongs to the histone deacetylase family. HD type 2 subfamily. As to quaternary structure, homodimer. Interacts with mef2. Broadly expressed.

The protein localises to the nucleus. The enzyme catalyses N(6)-acetyl-L-lysyl-[histone] + H2O = L-lysyl-[histone] + acetate. Functionally, devoided of intrinsic deacetylase activity, promotes the deacetylation of lysine residues on the N-terminal part of the core histones (H2A, H2B, H3 and H4) by recruiting other histone deacetylases. Histone deacetylation gives a tag for epigenetic repression and plays an important role in transcriptional regulation, cell cycle progression and developmental events. Represses MEF2-dependent transcription. This is Histone deacetylase 9 (hdac9) from Xenopus laevis (African clawed frog).